Consider the following 4486-residue polypeptide: Dynein axonemal heavy chain 9 (4486 aa).

A stem region spans residues 1-1831; the sequence is MRLAEERAAL…FANICDAQFL (1831 aa). Coiled coils occupy residues 381–410, 504–529, 639–662, 752–823, and 1326–1355; these read DLLR…EFQD, QSTD…LGTI, AEGK…ETRL, TLLE…TWVT, and NINV…AWDA. AAA regions lie at residues 1832–2053, 2113–2334, 2440–2688, and 2787–3036; these read YSYE…VLVV, ALVR…TRFK, EFDP…IFQG, and NHNE…EQRY. Residues 1870-1877, 2151-2158, 2478-2485, and 2825-2832 contribute to the ATP site; these read GPAGTGKT, GGAGTGKS, GTAGTGKS, and GVGGSGKQ. Coiled-coil stretches lie at residues 3051–3154, 3285–3341, and 3640–3675; these read YQSL…AKAE, KRQA…AEVT, and LVEN…REHY. The interval 3051–3341 is stalk; it reads YQSLLHRHRK…LKCQQEAEVT (291 aa). 2 AAA regions span residues 3429-3656 and 3866-4092; these read LMDD…EVEK and LRDF…VLYN.

It belongs to the dynein heavy chain family. Consists of at least two heavy chains and a number of intermediate and light chains. Interacts with ODAD1. In terms of tissue distribution, expressed in upper and lower respiratory airway epithelia (at protein level). Not detected in spermatozoa (at protein level).

The protein resides in the cytoplasm. It localises to the cytoskeleton. Its subcellular location is the cilium axoneme. Its function is as follows. Force generating protein required for cilia beating in respiratory epithelia. Produces force towards the minus ends of microtubules. Dynein has ATPase activity; the force-producing power stroke is thought to occur on release of ADP. The sequence is that of Dynein axonemal heavy chain 9 from Homo sapiens (Human).